We begin with the raw amino-acid sequence, 135 residues long: Ribonuclease P protein component 2 (135 aa).

The protein belongs to the eukaryotic/archaeal RNase P protein component 2 family. As to quaternary structure, consists of a catalytic RNA component and at least 4-5 protein subunits.

The protein resides in the cytoplasm. It carries out the reaction Endonucleolytic cleavage of RNA, removing 5'-extranucleotides from tRNA precursor.. In terms of biological role, part of ribonuclease P, a protein complex that generates mature tRNA molecules by cleaving their 5'-ends. In Methanococcus aeolicus (strain ATCC BAA-1280 / DSM 17508 / OCM 812 / Nankai-3), this protein is Ribonuclease P protein component 2.